The sequence spans 689 residues: Beta-adrenergic receptor kinase 1 (689 aa).

The segment at 1 to 190 (MADLEAVLAD…ELNIHLTMND (190 aa)) is N-terminal. An RGS domain is found at 54–175 (TFEKIFSQKL…IESDKFTRFC (122 aa)). The Protein kinase domain maps to 191 to 453 (FSVHRIIGRG…AQEVKESPFF (263 aa)). Residues 197–205 (IGRGGFGEV) and lysine 220 each bind ATP. Catalysis depends on aspartate 317, which acts as the Proton acceptor. In terms of domain architecture, AGC-kinase C-terminal spans 454–521 (RSLDWQMVFL…TISERWQQEV (68 aa)). In terms of domain architecture, PH spans 558–652 (DCIMHGYMSK…WKKELRDAYR (95 aa)). Residue serine 670 is modified to Phosphoserine.

Belongs to the protein kinase superfamily. AGC Ser/Thr protein kinase family. GPRK subfamily. As to quaternary structure, interacts with the heterodimer formed by GNB1 and GNG2. Interacts with GIT1. Interacts with, and phosphorylates chemokine-stimulated CCR5. Interacts with ARRB1. Interacts with LPAR1 and LPAR2. Interacts with RALA in response to LPAR1 activation. ADRBK1 and RALA mutually inhibit each other's binding to LPAR1. Interacts with ADRB2.

It is found in the cytoplasm. It localises to the cell membrane. The protein resides in the postsynapse. Its subcellular location is the presynapse. It catalyses the reaction [beta-adrenergic receptor] + ATP = [beta-adrenergic receptor]-phosphate + ADP + H(+). Its activity is regulated as follows. In contrast to other AGC family kinases, the catalytic activity is solely regulated by the binding of substrates and ligands, not by phosphorylation of the kinase domain. Specifically phosphorylates the agonist-occupied form of the beta-adrenergic and closely related receptors, probably inducing a desensitization of them. Key regulator of LPAR1 signaling. Competes with RALA for binding to LPAR1 thus affecting the signaling properties of the receptor. Desensitizes LPAR1 and LPAR2 in a phosphorylation-independent manner. Positively regulates ciliary smoothened (SMO)-dependent Hedgehog (Hh) signaling pathway by facilitating the trafficking of SMO into the cilium and the stimulation of SMO activity. Inhibits relaxation of airway smooth muscle in response to blue light. The protein is Beta-adrenergic receptor kinase 1 of Mesocricetus auratus (Golden hamster).